Consider the following 94-residue polypeptide: Large ribosomal subunit protein eL42 (94 aa).

Zn(2+) is bound by residues Cys11, Cys14, Cys71, and Cys74. The C4-type zinc-finger motif lies at Cys11–Cys74.

It belongs to the eukaryotic ribosomal protein eL42 family. As to quaternary structure, part of the 50S ribosomal subunit. The cofactor is Zn(2+).

Functionally, binds to the 23S rRNA. The sequence is that of Large ribosomal subunit protein eL42 from Pyrococcus abyssi (strain GE5 / Orsay).